The following is a 433-amino-acid chain: Enolase (433 aa).

Gln167 contributes to the (2R)-2-phosphoglycerate binding site. Residue Glu209 is the Proton donor of the active site. Mg(2+)-binding residues include Asp246, Glu291, and Asp318. Lys343, Arg372, Ser373, and Lys394 together coordinate (2R)-2-phosphoglycerate. The active-site Proton acceptor is Lys343.

It belongs to the enolase family. In terms of assembly, component of the RNA degradosome, a multiprotein complex involved in RNA processing and mRNA degradation. Requires Mg(2+) as cofactor.

Its subcellular location is the cytoplasm. It localises to the secreted. The protein localises to the cell surface. The catalysed reaction is (2R)-2-phosphoglycerate = phosphoenolpyruvate + H2O. It participates in carbohydrate degradation; glycolysis; pyruvate from D-glyceraldehyde 3-phosphate: step 4/5. Functionally, catalyzes the reversible conversion of 2-phosphoglycerate (2-PG) into phosphoenolpyruvate (PEP). It is essential for the degradation of carbohydrates via glycolysis. This Vibrio vulnificus (strain YJ016) protein is Enolase.